Reading from the N-terminus, the 97-residue chain is Putative septation protein SpoVG (97 aa).

This sequence belongs to the SpoVG family.

In terms of biological role, essential for sporulation. Interferes with or is a negative regulator of the pathway leading to asymmetric septation. The protein is Putative septation protein SpoVG of Bacillus licheniformis (strain ATCC 14580 / DSM 13 / JCM 2505 / CCUG 7422 / NBRC 12200 / NCIMB 9375 / NCTC 10341 / NRRL NRS-1264 / Gibson 46).